The following is a 354-amino-acid chain: Guanine nucleotide-binding protein G(t) subunit alpha-3 (354 aa).

Residues 1–27 (MGSGISSESKESAKRSKELEKKLQEDA) form a disordered region. The N-myristoyl glycine moiety is linked to residue G2. A compositionally biased stretch (basic and acidic residues) spans 8-27 (ESKESAKRSKELEKKLQEDA). The region spanning 32-354 (RTVKLLLLGA…KENLKDCGLF (323 aa)) is the G-alpha domain. Residues 35–48 (KLLLLGAGESGKST) are G1 motif. GTP-binding positions include 40–47 (GAGESGKS), 175–181 (LHSRVKT), 200–204 (DVGGQ), 269–272 (NKKD), and A326. Residues S47 and T181 each coordinate Mg(2+). Residues 173-181 (DVLHSRVKT) are G2 motif. Residues 196–205 (FRMFDVGGQR) are G3 motif. The tract at residues 265 to 272 (VLFLNKKD) is G4 motif. The segment at 324–329 (TCATDT) is G5 motif.

The protein belongs to the G-alpha family. G(i/o/t/z) subfamily. As to quaternary structure, g proteins are composed of 3 units; alpha, beta and gamma, respectively GNAT3, GNB1 and GNG13 for Gustducin heterotrimer for bitter taste transduction. The alpha chain contains the guanine nucleotide binding site. Component of the TAS2R14-GNAT3 complex, consisting of TAS2R14, GNAT3, GNB1 and GNG2; within the complex interacts with TAS2R14; this complex plays a role in the perception of bitterness. Gustducin heterotrimer may also be composed of GNAT3, GNB3 and GNG13. Post-translationally, potential N-myristoylation may anchor alpha-subunit to the inner surface of plasma membrane. In terms of tissue distribution, expressed in taste buds (sensory organs of clustered epithelial cells) of the circumvallate and foliate papillae of the tongue at protein level. Expressed in enteroendocrine L cells of the gut. Detected also in spermatozoa.

It is found in the cytoplasm. Its function is as follows. Guanine nucleotide-binding protein (G protein) alpha subunit playing a prominent role in bitter and sweet taste transduction as well as in umami (monosodium glutamate, monopotassium glutamate, and inosine monophosphate) taste transduction. Transduction by this alpha subunit involves coupling of specific cell-surface receptors with a cGMP-phosphodiesterase; Activation of phosphodiesterase lowers intracellular levels of cAMP and cGMP which may open a cyclic nucleotide-suppressible cation channel leading to influx of calcium, ultimately leading to release of neurotransmitter. Indeed, denatonium and strychnine induce transient reduction in cAMP and cGMP in taste tissue, whereas this decrease is inhibited by GNAT3 antibody. Gustducin heterotrimer transduces response to bitter and sweet compounds via regulation of phosphodiesterase for alpha subunit, as well as via activation of phospholipase C for beta and gamma subunits, with ultimate increase inositol trisphosphate and increase of intracellular Calcium. GNAT3 can functionally couple to taste receptors to transmit intracellular signal: receptor heterodimer TAS1R2/TAS1R3 senses sweetness and TAS1R1/TAS1R3 transduces umami taste, whereas the T2R family GPCRs such as TAS2R14 act as bitter sensors. Also functions as lumenal sugar sensors in the gut to control the expression of the Na+-glucose transporter SGLT1 in response to dietaty sugar, as well as the secretion of Glucagon-like peptide-1, GLP-1 and glucose-dependent insulinotropic polypeptide, GIP. Thus, may modulate the gut capacity to absorb sugars, with implications in malabsorption syndromes and diet-related disorders including diabetes and obesity. This is Guanine nucleotide-binding protein G(t) subunit alpha-3 (GNAT3) from Homo sapiens (Human).